We begin with the raw amino-acid sequence, 338 residues long: Ribosomal RNA large subunit methyltransferase F (338 aa).

The tract at residues M1 to H21 is disordered.

The protein belongs to the methyltransferase superfamily. METTL16/RlmF family.

It is found in the cytoplasm. It carries out the reaction adenosine(1618) in 23S rRNA + S-adenosyl-L-methionine = N(6)-methyladenosine(1618) in 23S rRNA + S-adenosyl-L-homocysteine + H(+). Specifically methylates the adenine in position 1618 of 23S rRNA. This Photobacterium profundum (strain SS9) protein is Ribosomal RNA large subunit methyltransferase F.